Reading from the N-terminus, the 544-residue chain is Membrane protein insertase YidC (544 aa).

Helical transmembrane passes span Leu-15–Phe-35, Leu-321–Pro-341, Trp-343–Phe-363, Leu-409–Val-429, and Met-506–Ile-526.

This sequence belongs to the OXA1/ALB3/YidC family. Type 1 subfamily. In terms of assembly, interacts with the Sec translocase complex via SecD. Specifically interacts with transmembrane segments of nascent integral membrane proteins during membrane integration.

The protein localises to the cell inner membrane. Functionally, required for the insertion and/or proper folding and/or complex formation of integral membrane proteins into the membrane. Involved in integration of membrane proteins that insert both dependently and independently of the Sec translocase complex, as well as at least some lipoproteins. Aids folding of multispanning membrane proteins. This chain is Membrane protein insertase YidC, found in Borrelia garinii subsp. bavariensis (strain ATCC BAA-2496 / DSM 23469 / PBi) (Borreliella bavariensis).